The following is a 385-amino-acid chain: MTERMILKVDHTGIDKPLLWTAILLALAGLVMVSSASLQIAETRLGDPFYYAMRHGIYLALGLGVGAFVYYAVPLALLERLRFVMLPVALVALVMVFIPGLGRTVNGSTRWIALPGLTIQASEIVKLCFVLYLAGYVAQRKAALETEWKAFLLPLGLLGVLMLLLLLEPDFGAVVVLGITAMGMLFLSGVPTLRFLLIGLIAVALGGLVAFAEPYRVARLMTFTDPWADQFGSGYQLTQSLIAFGRGHWFGVGLGNSVQKLFYLPEAHTDFVYAVMSEELGLLGNVALIGGFILLGWRVFRIGHRLEARGLLYHAYLVYGCAFVFCSQAFINLGVNMGLLPTKGLTLPFISYGGSSLLISAVMVGLILRAGAEADHLKARGRAAR.

The next 9 helical transmembrane spans lie at 18 to 38 (LLWT…SASL), 57 to 77 (IYLA…PLAL), 81 to 101 (LRFV…IPGL), 111 to 131 (WIAL…CFVL), 157 to 177 (LLGV…VVVL), 195 to 215 (FLLI…AEPY), 280 to 300 (LGLL…WRVF), 311 to 331 (LLYH…QAFI), and 347 to 367 (LPFI…VGLI).

The protein belongs to the SEDS family. FtsW subfamily.

Its subcellular location is the cell inner membrane. It carries out the reaction [GlcNAc-(1-&gt;4)-Mur2Ac(oyl-L-Ala-gamma-D-Glu-L-Lys-D-Ala-D-Ala)](n)-di-trans,octa-cis-undecaprenyl diphosphate + beta-D-GlcNAc-(1-&gt;4)-Mur2Ac(oyl-L-Ala-gamma-D-Glu-L-Lys-D-Ala-D-Ala)-di-trans,octa-cis-undecaprenyl diphosphate = [GlcNAc-(1-&gt;4)-Mur2Ac(oyl-L-Ala-gamma-D-Glu-L-Lys-D-Ala-D-Ala)](n+1)-di-trans,octa-cis-undecaprenyl diphosphate + di-trans,octa-cis-undecaprenyl diphosphate + H(+). It participates in cell wall biogenesis; peptidoglycan biosynthesis. Its function is as follows. Peptidoglycan polymerase that is essential for cell division. The polypeptide is Probable peptidoglycan glycosyltransferase FtsW (Alcanivorax borkumensis (strain ATCC 700651 / DSM 11573 / NCIMB 13689 / SK2)).